We begin with the raw amino-acid sequence, 149 residues long: 3-dehydroquinate dehydratase (149 aa).

The active-site Proton acceptor is the Tyr23. 3 residues coordinate substrate: Asn74, His80, and Asp87. Catalysis depends on His100, which acts as the Proton donor. Residues Leu101–Ser102 and Arg111 each bind substrate.

Belongs to the type-II 3-dehydroquinase family. As to quaternary structure, homododecamer.

The catalysed reaction is 3-dehydroquinate = 3-dehydroshikimate + H2O. It functions in the pathway metabolic intermediate biosynthesis; chorismate biosynthesis; chorismate from D-erythrose 4-phosphate and phosphoenolpyruvate: step 3/7. Catalyzes a trans-dehydration via an enolate intermediate. The sequence is that of 3-dehydroquinate dehydratase from Ruegeria pomeroyi (strain ATCC 700808 / DSM 15171 / DSS-3) (Silicibacter pomeroyi).